The sequence spans 113 residues: Large ribosomal subunit protein uL22 (113 aa).

It belongs to the universal ribosomal protein uL22 family. Part of the 50S ribosomal subunit.

In terms of biological role, this protein binds specifically to 23S rRNA; its binding is stimulated by other ribosomal proteins, e.g. L4, L17, and L20. It is important during the early stages of 50S assembly. It makes multiple contacts with different domains of the 23S rRNA in the assembled 50S subunit and ribosome. Functionally, the globular domain of the protein is located near the polypeptide exit tunnel on the outside of the subunit, while an extended beta-hairpin is found that lines the wall of the exit tunnel in the center of the 70S ribosome. The polypeptide is Large ribosomal subunit protein uL22 (Magnetococcus marinus (strain ATCC BAA-1437 / JCM 17883 / MC-1)).